Consider the following 546-residue polypeptide: Probable protein kinase UbiB (546 aa).

A Protein kinase domain is found at 124–502 (DFEIKPLASA…HVRQGQSRYF (379 aa)). ATP contacts are provided by residues 130–138 (LASASIAQV) and Lys-153. Asp-288 serves as the catalytic Proton acceptor. 2 consecutive transmembrane segments (helical) span residues 501–521 (YFLG…VSRP) and 522–542 (EWGL…FVGW).

The protein belongs to the ABC1 family. UbiB subfamily.

The protein localises to the cell inner membrane. The protein operates within cofactor biosynthesis; ubiquinone biosynthesis [regulation]. In terms of biological role, is probably a protein kinase regulator of UbiI activity which is involved in aerobic coenzyme Q (ubiquinone) biosynthesis. The protein is Probable protein kinase UbiB of Escherichia coli O127:H6 (strain E2348/69 / EPEC).